The sequence spans 556 residues: MQREYDYIIIGAGSAGNVLAARLTEDPGVSVLLLEAGGPDYRLDFRTQMPAALAFPLQGRRYNWAYETEPEPHMDNRRMECGRGKGLGGSSLINGMCYIRGNALDFDHWAKRPGLEDWGYRDVLPYFRKAETRDIGANDYHGGEGPVSVATPKNDNNVLFQAMVDAGVQAGYPRTDDLNGYQQEGFGPMDRTVTPQGRRASTARGYLDMAKPRDSLHIVTHATTDRILFAGKRAVGVHYLVGNSSEGIDAHARREVLVCAGAIASPQLLQRSGVGAPDLLRALDVQLVHDLPGVGQNLQDHLEVYMQYACTKPVSLYPALQWWNQPAIGAEWLFAGTGTGASNQFEAGGFIRTREEFDWPNIQYHFLPVAINYNGSNAVKEHGFQAHVGSMRTPSRGRVHARSRDPRQHPSILFNYQSTDQDWQEFRDAIRITREIIAQPALDPYRGREISPSADCKTDAELDAFVRARAETAYHPSCSCAMGTDDMAVVDGQGRVHGMEGLRVIDASIMPRIITGNLNATTIMIAEKIVDRIRGRAPLPRSTADYYVAGDAPVRR.

6–35 (DYIIIGAGSAGNVLAARLTEDPGVSVLLLE) is an FAD binding site. His475 (proton acceptor) is an active-site residue.

This sequence belongs to the GMC oxidoreductase family. FAD is required as a cofactor.

The catalysed reaction is choline + A = betaine aldehyde + AH2. The enzyme catalyses betaine aldehyde + NAD(+) + H2O = glycine betaine + NADH + 2 H(+). It functions in the pathway amine and polyamine biosynthesis; betaine biosynthesis via choline pathway; betaine aldehyde from choline (cytochrome c reductase route): step 1/1. Involved in the biosynthesis of the osmoprotectant glycine betaine. Catalyzes the oxidation of choline to betaine aldehyde and betaine aldehyde to glycine betaine at the same rate. This Xanthomonas campestris pv. campestris (strain 8004) protein is Oxygen-dependent choline dehydrogenase.